Here is a 342-residue protein sequence, read N- to C-terminus: uncharacterized protein (342 aa).

Transmembrane regions (helical) follow at residues 35–55 (YFRV…WCFS), 134–154 (LLFL…IIYF), and 161–180 (LFIT…YCFS). 2 disordered regions span residues 198-220 (SSDN…QQYN) and 311-342 (IINN…NYTN).

Its subcellular location is the membrane. This is an uncharacterized protein from Dictyostelium discoideum (Social amoeba).